A 558-amino-acid chain; its full sequence is Chaperonin GroEL 1 (558 aa).

Residues 29-32 (TLGP), 86-90 (DGTTT), Gly413, and Asp494 contribute to the ATP site.

It belongs to the chaperonin (HSP60) family. Forms a cylinder of 14 subunits composed of two heptameric rings stacked back-to-back. Interacts with the co-chaperonin GroES.

It localises to the cytoplasm. The enzyme catalyses ATP + H2O + a folded polypeptide = ADP + phosphate + an unfolded polypeptide.. Together with its co-chaperonin GroES, plays an essential role in assisting protein folding. The GroEL-GroES system forms a nano-cage that allows encapsulation of the non-native substrate proteins and provides a physical environment optimized to promote and accelerate protein folding. In Acaryochloris marina (strain MBIC 11017), this protein is Chaperonin GroEL 1.